The following is a 1305-amino-acid chain: ABC transporter FPSE_09185 (1305 aa).

The N-linked (GlcNAc...) asparagine glycan is linked to Asn-28. Helical transmembrane passes span 44–64 (FCVYVVGALASIGVGVTMPLM), 99–119 (LYIVGLFLGRWLLNSINKFCF), 172–192 (RLGTFVTYVSTIIAAIAVAFT), 199–219 (IVSASLLVYIAIIIAIVVPIY), 277–297 (IIGAQTGLVFFGIFGVFGLAF), and 312–332 (VGVVIIVLTSVMLILFAFSYL). Residues 48–348 (VVGALASIGV…ISQAMVAATE (301 aa)) enclose the ABC transmembrane type-1 1 domain. The ABC transporter 1 domain occupies 372–663 (LIFKDVTFEY…ENGVYYSLVE (292 aa)). An ATP-binding site is contributed by 407-414 (GPSGSGKS). A disordered region spans residues 434-454 (EAATPRSSKEGERDNHDERKY). Residues 440–454 (SSKEGERDNHDERKY) are compositionally biased toward basic and acidic residues. N-linked (GlcNAc...) asparagine glycosylation is found at Asn-468, Asn-507, and Asn-525. 6 consecutive transmembrane segments (helical) span residues 737-757 (FLLITIASMGVGAATPLQAWL), 780-800 (GFMWLALAGGVGVAYFFQCWI), 851-873 (GVFGLNLASATSSVFTIVGCLII), 877-899 (FGWKLGLVGLCVTVPIMMVSGFW), 964-984 (AVIFGFAESATLGCQALILWY), and 999-1019 (FMVSYMAIINGVEYAGQILGV). The 288-residue stretch at 738 to 1025 (LLITIASMGV…ILGVAPSAAQ (288 aa)) folds into the ABC transmembrane type-1 2 domain. Residues 1038–1057 (DSNRSSQEAEKSGPTVEDTD) form a disordered region. N-linked (GlcNAc...) asparagine glycans are attached at residues Asn-1040, Asn-1066, and Asn-1075. The ABC transporter 2 domain maps to 1062-1300 (IELCNVSFKY…RGIYWDMCQT (239 aa)). 1096-1103 (GPSGCGKT) contacts ATP. N-linked (GlcNAc...) asparagine glycosylation occurs at Asn-1125.

Belongs to the ABC transporter superfamily. ABCB family. Multidrug resistance exporter (TC 3.A.1.201) subfamily.

It localises to the membrane. Functionally, ABC transporter; part of the gene cluster that mediates the biosynthesis of the lipopeptides W493 A and B. W493 A and B consist of six amino acid residues D-allo-thr, L-Ala, D-Ala, L-Gln, D-Tyr, and L-Val/L-Ile linked to a 3-hydroxy-4-methyltetradecanoic acid polyketide chain. May be involved in excretion or internal transport of W493 A and B. The polypeptide is ABC transporter FPSE_09185 (Fusarium pseudograminearum (strain CS3096) (Wheat and barley crown-rot fungus)).